The sequence spans 345 residues: MNNSYGEIIKISTFGESHGLIIGALIDGFFSNLYISEKFIQKNLNLRKPFTSLFSTQRREQDKVKIFTGIFKNKTTGAPVLMLIKNNDKQSSDYNNISLNFRPGHADYTYFLKYKFRDYRGGGRSSARETACRVASGCVFKNLIYNKGVIVRSYIKKIGFLKINFKYWNYTLNRFFSNLLFINEIKDIINNCKNSCNSLSSEIVIIINGLEPSLGDPLYKKINSTISNYLLSINATKSICFGFNFKNKNSFQVKDEIKNSGFTSNNNGGILAGITNGQPLVIKILFKPTSSTSRKIKTINEKLKNITNKTYGRHDPCVGLRAVPVIESMLYTILINKILKKKIYE.

This sequence belongs to the chorismate synthase family. Homotetramer. FMNH2 serves as cofactor.

The catalysed reaction is 5-O-(1-carboxyvinyl)-3-phosphoshikimate = chorismate + phosphate. Its pathway is metabolic intermediate biosynthesis; chorismate biosynthesis; chorismate from D-erythrose 4-phosphate and phosphoenolpyruvate: step 7/7. This chain is Chorismate synthase (aroC), found in Carsonella ruddii (strain PV).